A 308-amino-acid polypeptide reads, in one-letter code: Aliphatic nitrilase (308 aa).

Residues 4–270 (FRAAVVQAAP…ETILTADLDT (267 aa)) enclose the CN hydrolase domain. E44 serves as the catalytic Proton acceptor. K130 is a catalytic residue. The active-site Nucleophile is C164.

The protein belongs to the carbon-nitrogen hydrolase superfamily. Nitrilase family.

It carries out the reaction a nitrile + 2 H2O = a carboxylate + NH4(+). In terms of biological role, nitrilase that hydrolyzes preferentially phenylacetonitrile, but not (R,S)-mandelonitrile. Also acts on dinitriles like phenylenediacetonitriles (PDAs) 1,2-PDA, 1,3-PDA, and 1,4-PDA, and cyanophenyl acetonitriles (CPAs) 2-CPA and 4-CPA, but with lower activities. The chain is Aliphatic nitrilase (nit) from Sinorhizobium fredii (strain HH103).